The sequence spans 1365 residues: Homeotic protein spalt-major (1365 aa).

Disordered stretches follow at residues 47-194, 270-298, and 322-363; these read SADK…EVTL, QAKQ…EEEE, and LINA…NTHK. 2 stretches are compositionally biased toward low complexity: residues 63–76 and 87–99; these read SPLT…SPSR and EQST…PEQS. Residues 103–117 are compositionally biased toward basic and acidic residues; it reads HQLENDIKSEAKSEI. Low complexity predominate over residues 146–157; that stretch reads PSSPVAEASAEE. Basic and acidic residues predominate over residues 159-181; it reads ATERTPEKEKEKDVEVDVEKPDE. Positions 275-298 are enriched in acidic residues; that stretch reads EDTEEDADQEQDQEQETDTYEEEE. Residues 346 to 363 are compositionally biased toward basic and acidic residues; that stretch reads HDHESQPNRRPSLDNTHK. C2H2-type zinc fingers lie at residues 451–473 and 479–501; these read HRCR…IRSH and FKCN…FQRH. 2 disordered regions span residues 508 to 554 and 586 to 716; these read VPMN…ASFP and ELPT…TPGQ. Positions 530–539 are enriched in polar residues; that stretch reads MSPTDSSPNH. The segment covering 540–554 has biased composition (pro residues); sequence SPAPPPLGSAPASFP. 2 stretches are compositionally biased toward basic and acidic residues: residues 603-622 and 638-662; these read PQVK…HEQE and VRIK…EPRR. Serine 739 and serine 744 each carry phosphoserine. Residues 740–772 are disordered; sequence PEHHSPVRSPAGGALPPGVPPPPHHHPHHMARS. 3 C2H2-type zinc fingers span residues 824-846, 852-874, and 884-906; these read NQCV…YRTH, FKCR…MAVH, and HQCP…IRLH. Disordered stretches follow at residues 948–1012, 1030–1129, and 1146–1241; these read ALPG…RSGD, VVNT…ILTS, and HHLQ…GARP. Residues 976-991 show a composition bias toward acidic residues; it reads DMDDNMDCGEDYDDDV. Low complexity predominate over residues 1040-1054; the sequence is SSASSHGHSVGSTSA. Residues 1055–1079 show a composition bias toward polar residues; sequence PTSPSVHASSQVIKRSSSPARSEAS. Phosphoserine occurs at positions 1076 and 1079. 3 stretches are compositionally biased toward low complexity: residues 1085 to 1100, 1114 to 1123, and 1146 to 1168; these read LTPR…SRSP, RSPSGSSHAS, and HHLQ…AAAA. Positions 1181–1191 are enriched in basic and acidic residues; sequence QHQEQLRREAA. A compositionally biased stretch (low complexity) spans 1192 to 1218; the sequence is EAQQKAAAAAAAAAAAAAAQRQTPPQA. 2 C2H2-type zinc fingers span residues 1289–1311 and 1317–1339; these read TTCG…YRSH and FKCS…MLTH.

The protein belongs to the sal C2H2-type zinc-finger protein family.

It is found in the nucleus. Required for the establishment of the posterior-most head and the anterior-most tail segments of the embryo. Probably function as a transcriptional regulator. Could repress the transcription of the tsh gene. The chain is Homeotic protein spalt-major (salm) from Drosophila melanogaster (Fruit fly).